We begin with the raw amino-acid sequence, 100 residues long: Urease subunit gamma (100 aa).

The protein belongs to the urease gamma subunit family. In terms of assembly, heterotrimer of UreA (gamma), UreB (beta) and UreC (alpha) subunits. Three heterotrimers associate to form the active enzyme.

The protein localises to the cytoplasm. The catalysed reaction is urea + 2 H2O + H(+) = hydrogencarbonate + 2 NH4(+). It functions in the pathway nitrogen metabolism; urea degradation; CO(2) and NH(3) from urea (urease route): step 1/1. The chain is Urease subunit gamma from Mycobacterium ulcerans (strain Agy99).